The chain runs to 337 residues: Anthranilate phosphoribosyltransferase (337 aa).

5-phospho-alpha-D-ribose 1-diphosphate-binding positions include Gly82, 85–86 (GD), Thr90, 92–95 (NIST), 110–118 (KHGGRSVSS), and Ser122. Residue Gly82 coordinates anthranilate. Ser94 provides a ligand contact to Mg(2+). Arg168 lines the anthranilate pocket. Mg(2+)-binding residues include Asp226 and Glu227.

This sequence belongs to the anthranilate phosphoribosyltransferase family. Homodimer. Mg(2+) is required as a cofactor.

It carries out the reaction N-(5-phospho-beta-D-ribosyl)anthranilate + diphosphate = 5-phospho-alpha-D-ribose 1-diphosphate + anthranilate. The protein operates within amino-acid biosynthesis; L-tryptophan biosynthesis; L-tryptophan from chorismate: step 2/5. In terms of biological role, catalyzes the transfer of the phosphoribosyl group of 5-phosphorylribose-1-pyrophosphate (PRPP) to anthranilate to yield N-(5'-phosphoribosyl)-anthranilate (PRA). The protein is Anthranilate phosphoribosyltransferase of Francisella tularensis subsp. mediasiatica (strain FSC147).